Consider the following 570-residue polypeptide: Sulfite reductase [NADPH] hemoprotein beta-component (570 aa).

Residues cysteine 434, cysteine 440, cysteine 479, and cysteine 483 each contribute to the [4Fe-4S] cluster site. Cysteine 483 is a binding site for siroheme.

The protein belongs to the nitrite and sulfite reductase 4Fe-4S domain family. As to quaternary structure, alpha(8)-beta(8). The alpha component is a flavoprotein, the beta component is a hemoprotein. The cofactor is siroheme. Requires [4Fe-4S] cluster as cofactor.

It catalyses the reaction hydrogen sulfide + 3 NADP(+) + 3 H2O = sulfite + 3 NADPH + 4 H(+). It functions in the pathway sulfur metabolism; hydrogen sulfide biosynthesis; hydrogen sulfide from sulfite (NADPH route): step 1/1. Component of the sulfite reductase complex that catalyzes the 6-electron reduction of sulfite to sulfide. This is one of several activities required for the biosynthesis of L-cysteine from sulfate. This Salmonella paratyphi A (strain ATCC 9150 / SARB42) protein is Sulfite reductase [NADPH] hemoprotein beta-component.